Consider the following 126-residue polypeptide: Large ribosomal subunit protein bL17 (126 aa).

Belongs to the bacterial ribosomal protein bL17 family. In terms of assembly, part of the 50S ribosomal subunit. Contacts protein L32.

The protein is Large ribosomal subunit protein bL17 of Xylella fastidiosa (strain M12).